The chain runs to 267 residues: Ribosomal RNA small subunit methyltransferase A (267 aa).

Positions 13, 15, 40, 61, 85, and 105 each coordinate S-adenosyl-L-methionine.

This sequence belongs to the class I-like SAM-binding methyltransferase superfamily. rRNA adenine N(6)-methyltransferase family. RsmA subfamily.

It localises to the cytoplasm. The catalysed reaction is adenosine(1518)/adenosine(1519) in 16S rRNA + 4 S-adenosyl-L-methionine = N(6)-dimethyladenosine(1518)/N(6)-dimethyladenosine(1519) in 16S rRNA + 4 S-adenosyl-L-homocysteine + 4 H(+). Specifically dimethylates two adjacent adenosines (A1518 and A1519) in the loop of a conserved hairpin near the 3'-end of 16S rRNA in the 30S particle. May play a critical role in biogenesis of 30S subunits. In Bacteroides thetaiotaomicron (strain ATCC 29148 / DSM 2079 / JCM 5827 / CCUG 10774 / NCTC 10582 / VPI-5482 / E50), this protein is Ribosomal RNA small subunit methyltransferase A.